A 148-amino-acid polypeptide reads, in one-letter code: MSHGFTKEEVAEFQAAFNRFDKNKDGHISVEELGDVMKQLGKNLPEKDLKALISKLDTDGDGKISFEEFLTAIEKYKKGHRAGELRAVFNVLDQNGDGYITVDELKESLSKLGESLSQEELEDMIRVADVDQDGKVKYEEFVRLHVEN.

EF-hand domains lie at 8 to 43 (EEVA…LGKN), 44 to 79 (LPEK…YKKG), 80 to 115 (HRAG…LGES), and 116 to 148 (LSQE…HVEN). Aspartate 21, asparagine 23, aspartate 25, histidine 27, glutamate 32, aspartate 57, aspartate 59, aspartate 61, lysine 63, glutamate 68, aspartate 93, asparagine 95, aspartate 97, tyrosine 99, and glutamate 104 together coordinate Ca(2+).

Its function is as follows. Implicated in the early stage of ectopic ossification. The sequence is that of Calmodulin-4 (Calm4) from Mus musculus (Mouse).